A 229-amino-acid chain; its full sequence is Potassium/proton antiporter CemA (229 aa).

The next 3 helical transmembrane spans lie at 6 to 26, 107 to 127, and 189 to 209; these read AFIPFFYFTSIVFLPWLISLC, ILHFSTNLISFVILSGYSFWG, and ILSGLVSTFPVILDTIFKYWI.

It belongs to the CemA family.

Its subcellular location is the plastid. It is found in the chloroplast inner membrane. It carries out the reaction K(+)(in) + H(+)(out) = K(+)(out) + H(+)(in). Contributes to K(+)/H(+) antiport activity by supporting proton efflux to control proton extrusion and homeostasis in chloroplasts in a light-dependent manner to modulate photosynthesis. Prevents excessive induction of non-photochemical quenching (NPQ) under continuous-light conditions. Indirectly promotes efficient inorganic carbon uptake into chloroplasts. This Arabis hirsuta (Hairy rock-cress) protein is Potassium/proton antiporter CemA.